The chain runs to 267 residues: Small ribosomal subunit protein uS2 (267 aa).

The tract at residues 234 to 267 (DNAEEELAEAISQEEPSAAEELPDDMADNENEFE) is disordered. The segment covering 250–267 (SAAEELPDDMADNENEFE) has biased composition (acidic residues).

It belongs to the universal ribosomal protein uS2 family.

The polypeptide is Small ribosomal subunit protein uS2 (Dichelobacter nodosus (strain VCS1703A)).